The following is a 264-amino-acid chain: MTRIVIAGPRGNMGQEAVKLCLREESFELVAVVDSKNDGKQLKGLQEFQQGDVPVYTDMARCFAEHEPDVLIDLTAPAFGRKHMEVAFEHGVRPVVGTTGFSDEDIRDLTKLAEAKELGAIIAPNFAIGAILMMKFAQTAARYMNDVEIIEQHHDRKLDAPSGTAVKTAQLIAEVRAPKKQGHEQEREEMAGARGADFDGMKIHSVRLPGRVAHQEVLFGGVGQTLSIRHDSLNRESFMPGVKLAVEQVVKLSTLVYGLENLID.

8–13 (GPRGNM) contributes to the NAD(+) binding site. K36 lines the NADP(+) pocket. NAD(+)-binding positions include 97–99 (GTT) and 123–126 (APNF). H153 (proton donor/acceptor) is an active-site residue. Residue H154 participates in (S)-2,3,4,5-tetrahydrodipicolinate binding. K157 serves as the catalytic Proton donor. 163–164 (GT) contributes to the (S)-2,3,4,5-tetrahydrodipicolinate binding site.

The protein belongs to the DapB family.

The protein localises to the cytoplasm. The catalysed reaction is (S)-2,3,4,5-tetrahydrodipicolinate + NAD(+) + H2O = (2S,4S)-4-hydroxy-2,3,4,5-tetrahydrodipicolinate + NADH + H(+). It catalyses the reaction (S)-2,3,4,5-tetrahydrodipicolinate + NADP(+) + H2O = (2S,4S)-4-hydroxy-2,3,4,5-tetrahydrodipicolinate + NADPH + H(+). It participates in amino-acid biosynthesis; L-lysine biosynthesis via DAP pathway; (S)-tetrahydrodipicolinate from L-aspartate: step 4/4. Its function is as follows. Catalyzes the conversion of 4-hydroxy-tetrahydrodipicolinate (HTPA) to tetrahydrodipicolinate. The protein is 4-hydroxy-tetrahydrodipicolinate reductase of Shouchella clausii (strain KSM-K16) (Alkalihalobacillus clausii).